Reading from the N-terminus, the 236-residue chain is uncharacterized protein (236 aa).

Residues 4 to 236 enclose the GP-PDE domain; the sequence is QFLIAYRGYS…VKFQITAQIY (233 aa).

It to glycerophosphoryl diester phosphodiesterases (EC 3.1.4.46). The protein to M.genitalium MG293.

This is an uncharacterized protein from Mycoplasma genitalium (strain ATCC 33530 / DSM 19775 / NCTC 10195 / G37) (Mycoplasmoides genitalium).